The chain runs to 739 residues: Long-chain-fatty-acid--CoA ligase ACSBG2 (739 aa).

ATP-binding positions include 287–295, 478–483, Asp556, Arg571, and Lys684; these read TSGTTGQPK and ELYGMS.

The protein belongs to the ATP-dependent AMP-binding enzyme family. Bubblegum subfamily.

The protein localises to the cytoplasm. It carries out the reaction a long-chain fatty acid + ATP + CoA = a long-chain fatty acyl-CoA + AMP + diphosphate. The catalysed reaction is (5Z,8Z,11Z,14Z)-eicosatetraenoate + ATP + CoA = (5Z,8Z,11Z,14Z)-eicosatetraenoyl-CoA + AMP + diphosphate. It catalyses the reaction hexadecanoate + ATP + CoA = hexadecanoyl-CoA + AMP + diphosphate. The enzyme catalyses (9Z)-octadecenoate + ATP + CoA = (9Z)-octadecenoyl-CoA + AMP + diphosphate. It carries out the reaction (9Z,12Z)-octadecadienoate + ATP + CoA = (9Z,12Z)-octadecadienoyl-CoA + AMP + diphosphate. The catalysed reaction is tetracosanoate + ATP + CoA = tetracosanoyl-CoA + AMP + diphosphate. Functionally, catalyzes the conversion of fatty acids such as long chain and very long-chain fatty acids to their active form acyl-CoAs for both synthesis of cellular lipids, and degradation via beta-oxidation. Can activate diverse saturated, monosaturated and polyunsaturated fatty acids. The sequence is that of Long-chain-fatty-acid--CoA ligase ACSBG2 from Xenopus laevis (African clawed frog).